Here is a 362-residue protein sequence, read N- to C-terminus: MTPAGKRILVMAGGTGGHVFPALAVAKYLAQQGWQVRWLGTADRMEARLVPQYGFDIDFIDIKGVRGNGLIRKLAAPFKVVRSILQAKAVIAEFKPDVVLGMGGFASGPGGVAARLAGIPLVLHEQNAIPGMTNKLLSRIATQVLCAFKNTFTTVKAKVVGNPIRQELIALGAEPKPEADEALKVLVVGGSLGAKVFNDLMPEAVAILSQQQSVTVWHQVGKDNLAGVKAAYQQHGQDGGVNIAEFIDDMEAAYRWADVVLCRAGALTVSELAAVGLPSILVPYPHAVDDHQTRNGQVLVEAGAAFLLPQAILDVNKLAGKLQLLANDRTELARMGQRARDVAVLDATEQVAAVCISLAEKG.

UDP-N-acetyl-alpha-D-glucosamine-binding positions include 15–17, Asn127, Arg165, Ser191, Ile247, 266–271, and Gln292; these read TGG and ALTVSE.

It belongs to the glycosyltransferase 28 family. MurG subfamily.

It localises to the cell inner membrane. It carries out the reaction di-trans,octa-cis-undecaprenyl diphospho-N-acetyl-alpha-D-muramoyl-L-alanyl-D-glutamyl-meso-2,6-diaminopimeloyl-D-alanyl-D-alanine + UDP-N-acetyl-alpha-D-glucosamine = di-trans,octa-cis-undecaprenyl diphospho-[N-acetyl-alpha-D-glucosaminyl-(1-&gt;4)]-N-acetyl-alpha-D-muramoyl-L-alanyl-D-glutamyl-meso-2,6-diaminopimeloyl-D-alanyl-D-alanine + UDP + H(+). Its pathway is cell wall biogenesis; peptidoglycan biosynthesis. Its function is as follows. Cell wall formation. Catalyzes the transfer of a GlcNAc subunit on undecaprenyl-pyrophosphoryl-MurNAc-pentapeptide (lipid intermediate I) to form undecaprenyl-pyrophosphoryl-MurNAc-(pentapeptide)GlcNAc (lipid intermediate II). The protein is UDP-N-acetylglucosamine--N-acetylmuramyl-(pentapeptide) pyrophosphoryl-undecaprenol N-acetylglucosamine transferase of Shewanella baltica (strain OS223).